A 275-amino-acid polypeptide reads, in one-letter code: AA9 family lytic polysaccharide monooxygenase AA9-X282 (275 aa).

An N-terminal signal peptide occupies residues 1–17; that stretch reads MFTKLIIAASLAASVAA. Residue H18 coordinates Cu(2+). T20 carries the post-translational modification Phosphothreonine. Phosphoserine is present on residues S43 and S49. Residue T50 is modified to Phosphothreonine. S58 carries the post-translational modification Phosphoserine. C66 and C185 are disulfide-bonded. H96 serves as a coordination point for Cu(2+). S130 is subject to Phosphoserine. O2-binding residues include H171 and Q180. Y182 is a binding site for Cu(2+). The tract at residues 236 to 265 is X282 extension; that stretch reads TSPAVANTPYPTTATWNTALQPSTVPTAVP. The 9res motif signature appears at 268 to 275; sequence GTPGIGKA.

Belongs to the polysaccharide monooxygenase AA9 family. Requires Cu(2+) as cofactor.

It localises to the secreted. It carries out the reaction [(1-&gt;4)-beta-D-glucosyl]n+m + reduced acceptor + O2 = 4-dehydro-beta-D-glucosyl-[(1-&gt;4)-beta-D-glucosyl]n-1 + [(1-&gt;4)-beta-D-glucosyl]m + acceptor + H2O.. Its function is as follows. Lytic polysaccharide monooxygenase (LPMO) that depolymerizes crystalline and amorphous polysaccharides via the oxidation of scissile alpha- or beta-(1-4)-glycosidic bonds, yielding C1 oxidation products. Catalysis by LPMOs requires the reduction of the active-site copper from Cu(II) to Cu(I) by a reducing agent and H(2)O(2) or O(2) as a cosubstrate. Shows only weak binding properties to cellulose, and low cellulolytic oxidative activity which questions the involvement of X282 extension-containing AA9 proteins in the degradation of plant cell wall and opens new avenues as to the divergence of function of some AA9 members. The polypeptide is AA9 family lytic polysaccharide monooxygenase AA9-X282 (Trametes coccinea (strain BRFM310) (Pycnoporus coccineus)).